Reading from the N-terminus, the 351-residue chain is Sesquiterpene synthase 14 (351 aa).

Mg(2+) is bound by residues D87, N223, S227, and E231. The DDXXD motif signature appears at 87 to 91 (DEYTD). Residues 223–231 (NDIASYNKE) carry the NSE/DTE motif motif. The (2E,6E)-farnesyl diphosphate site is built by R312 and Y313.

It belongs to the terpene synthase family. The cofactor is Mg(2+).

The enzyme catalyses (2E,6E)-farnesyl diphosphate = pentalenene + diphosphate. Functionally, terpene cyclase that catalyzes the cyclization of farnesyl diphosphate (FPP) to pentalenene as a major product, as well as caryophyllene. This is Sesquiterpene synthase 14 from Postia placenta (strain ATCC 44394 / Madison 698-R) (Brown rot fungus).